The chain runs to 142 residues: Holo-[acyl-carrier-protein] synthase (142 aa).

Mg(2+) contacts are provided by D8 and E57.

This sequence belongs to the P-Pant transferase superfamily. AcpS family. It depends on Mg(2+) as a cofactor.

It is found in the cytoplasm. It carries out the reaction apo-[ACP] + CoA = holo-[ACP] + adenosine 3',5'-bisphosphate + H(+). In terms of biological role, transfers the 4'-phosphopantetheine moiety from coenzyme A to a Ser of acyl-carrier-protein. The sequence is that of Holo-[acyl-carrier-protein] synthase from Ruegeria sp. (strain TM1040) (Silicibacter sp.).